The sequence spans 1299 residues: DNA-directed RNA polymerase subunit beta' (1299 aa).

Zn(2+) is bound by residues C60, C62, C75, and C78. Residues D535, D537, and D539 each contribute to the Mg(2+) site. Residues C877, C954, C961, and C964 each coordinate Zn(2+).

Belongs to the RNA polymerase beta' chain family. The RNAP catalytic core consists of 2 alpha, 1 beta, 1 beta' and 1 omega subunit. When a sigma factor is associated with the core the holoenzyme is formed, which can initiate transcription. The cofactor is Mg(2+). Zn(2+) serves as cofactor.

It carries out the reaction RNA(n) + a ribonucleoside 5'-triphosphate = RNA(n+1) + diphosphate. DNA-dependent RNA polymerase catalyzes the transcription of DNA into RNA using the four ribonucleoside triphosphates as substrates. The polypeptide is DNA-directed RNA polymerase subunit beta' (Pseudarthrobacter chlorophenolicus (strain ATCC 700700 / DSM 12829 / CIP 107037 / JCM 12360 / KCTC 9906 / NCIMB 13794 / A6) (Arthrobacter chlorophenolicus)).